Reading from the N-terminus, the 555-residue chain is Transmembrane protein 87B (555 aa).

A signal peptide spans 1 to 42; that stretch reads MAAACRSEAGLLPSLLCRRPAGAQLLRVALCLLCWVPAAVDA. The Lumenal segment spans residues 43–216; sequence VPELGLWTRT…HGYISASDWP (174 aa). N-linked (GlcNAc...) asparagine glycans are attached at residues N68, N160, and N198. Residues 217–237 traverse the membrane as a helical segment; that stretch reads LMIFYMVMCIVYILYGVLWLL. Residues 238-248 lie on the Cytoplasmic side of the membrane; it reads WSACYWKDILR. Residues 249-269 traverse the membrane as a helical segment; that stretch reads IQFWIAAVIFLGMLEKAVFYS. At 270-300 the chain is on the lumenal side; sequence EYQNINSTGLSTQGLLIFAELISAVKRTLAR. N-linked (GlcNAc...) asparagine glycosylation is present at N275. A helical transmembrane segment spans residues 301 to 321; that stretch reads LLVIIVSLGYGIVKPRLGTVM. Topologically, residues 322 to 323 are cytoplasmic; the sequence is HR. The chain crosses the membrane as a helical span at residues 324-344; that stretch reads VIGLGLLYLIFAAIEGVMRVI. The Lumenal segment spans residues 345–351; the sequence is GGSKHLA. A helical transmembrane segment spans residues 352-372; sequence VVLTDIVLAVIDSIFVWFIFI. Over 373 to 394 the chain is Cytoplasmic; sequence SLAQTMKTLRLRKNTVKFSLYR. A helical transmembrane segment spans residues 395 to 415; it reads HFTNTLIFAVLASIVFMVWTT. Topologically, residues 416–429 are lumenal; it reads KTFRIAKCQSDWME. The helical transmembrane segment at 430 to 450 threads the bilayer; that stretch reads LWVDDAFWSFLFSVILIVIMF. The Cytoplasmic portion of the chain corresponds to 451-555; the sequence is LWRPSANNQR…EKMFSSEKIM (105 aa). S470, S497, and S534 each carry phosphoserine.

It belongs to the LU7TM family. TMEM87 subfamily.

The protein resides in the golgi apparatus membrane. Its function is as follows. May be involved in retrograde transport from endosomes to the trans-Golgi network (TGN). The sequence is that of Transmembrane protein 87B from Mus musculus (Mouse).